The primary structure comprises 308 residues: ATP synthase gamma chain (308 aa).

Belongs to the ATPase gamma chain family. As to quaternary structure, F-type ATPases have 2 components, CF(1) - the catalytic core - and CF(0) - the membrane proton channel. CF(1) has five subunits: alpha(3), beta(3), gamma(1), delta(1), epsilon(1). CF(0) has three main subunits: a, b and c.

The protein localises to the cell inner membrane. Functionally, produces ATP from ADP in the presence of a proton gradient across the membrane. The gamma chain is believed to be important in regulating ATPase activity and the flow of protons through the CF(0) complex. The polypeptide is ATP synthase gamma chain (Bartonella tribocorum (strain CIP 105476 / IBS 506)).